A 482-amino-acid chain; its full sequence is Membrane-bound lytic murein transglycosylase F (482 aa).

The signal sequence occupies residues 1-13 (MKGLFLRIITALA). A non-LT domain region spans residues 14–267 (LLFWAIDMVF…NLKEKYLGHI (254 aa)). An LT domain region spans residues 268–482 (SQFDYVDTRS…NLEEIKENKD (215 aa)). Glu312 is a catalytic residue.

The protein in the N-terminal section; belongs to the bacterial solute-binding protein 3 family. This sequence in the C-terminal section; belongs to the transglycosylase Slt family.

The protein localises to the cell outer membrane. It carries out the reaction Exolytic cleavage of the (1-&gt;4)-beta-glycosidic linkage between N-acetylmuramic acid (MurNAc) and N-acetylglucosamine (GlcNAc) residues in peptidoglycan, from either the reducing or the non-reducing ends of the peptidoglycan chains, with concomitant formation of a 1,6-anhydrobond in the MurNAc residue.. Its function is as follows. Murein-degrading enzyme that degrades murein glycan strands and insoluble, high-molecular weight murein sacculi, with the concomitant formation of a 1,6-anhydromuramoyl product. Lytic transglycosylases (LTs) play an integral role in the metabolism of the peptidoglycan (PG) sacculus. Their lytic action creates space within the PG sacculus to allow for its expansion as well as for the insertion of various structures such as secretion systems and flagella. This Haemophilus influenzae (strain PittEE) protein is Membrane-bound lytic murein transglycosylase F.